The primary structure comprises 561 residues: Dihydroxy-acid dehydratase (561 aa).

Position 50 (C50) interacts with [2Fe-2S] cluster. D82 serves as a coordination point for Mg(2+). Residue C123 coordinates [2Fe-2S] cluster. Mg(2+) contacts are provided by D124 and K125. At K125 the chain carries N6-carboxylysine. Residue C195 participates in [2Fe-2S] cluster binding. A Mg(2+)-binding site is contributed by E447. S473 (proton acceptor) is an active-site residue.

It belongs to the IlvD/Edd family. Homodimer. The cofactor is [2Fe-2S] cluster. It depends on Mg(2+) as a cofactor.

It catalyses the reaction (2R)-2,3-dihydroxy-3-methylbutanoate = 3-methyl-2-oxobutanoate + H2O. The catalysed reaction is (2R,3R)-2,3-dihydroxy-3-methylpentanoate = (S)-3-methyl-2-oxopentanoate + H2O. It functions in the pathway amino-acid biosynthesis; L-isoleucine biosynthesis; L-isoleucine from 2-oxobutanoate: step 3/4. Its pathway is amino-acid biosynthesis; L-valine biosynthesis; L-valine from pyruvate: step 3/4. Its function is as follows. Functions in the biosynthesis of branched-chain amino acids. Catalyzes the dehydration of (2R,3R)-2,3-dihydroxy-3-methylpentanoate (2,3-dihydroxy-3-methylvalerate) into 2-oxo-3-methylpentanoate (2-oxo-3-methylvalerate) and of (2R)-2,3-dihydroxy-3-methylbutanoate (2,3-dihydroxyisovalerate) into 2-oxo-3-methylbutanoate (2-oxoisovalerate), the penultimate precursor to L-isoleucine and L-valine, respectively. This chain is Dihydroxy-acid dehydratase, found in Rippkaea orientalis (strain PCC 8801 / RF-1) (Cyanothece sp. (strain PCC 8801)).